The following is a 261-amino-acid chain: Glucosamine-6-phosphate deaminase (261 aa).

Aspartate 67 serves as the catalytic Proton acceptor; for enolization step. Aspartate 136 acts as the For ring-opening step in catalysis. Histidine 138 (proton acceptor; for ring-opening step) is an active-site residue. The active-site For ring-opening step is glutamate 143.

Belongs to the glucosamine/galactosamine-6-phosphate isomerase family. NagB subfamily.

It catalyses the reaction alpha-D-glucosamine 6-phosphate + H2O = beta-D-fructose 6-phosphate + NH4(+). It participates in amino-sugar metabolism; N-acetylneuraminate degradation; D-fructose 6-phosphate from N-acetylneuraminate: step 5/5. Functionally, catalyzes the reversible isomerization-deamination of glucosamine 6-phosphate (GlcN6P) to form fructose 6-phosphate (Fru6P) and ammonium ion. The chain is Glucosamine-6-phosphate deaminase from Streptomyces avermitilis (strain ATCC 31267 / DSM 46492 / JCM 5070 / NBRC 14893 / NCIMB 12804 / NRRL 8165 / MA-4680).